Reading from the N-terminus, the 165-residue chain is Large ribosomal subunit protein uL15 (165 aa).

Over residues 1–30 (MTNKKRRQRGSRTHGGGTHKNRRGAGHRGG) the composition is skewed to basic residues. 2 disordered regions span residues 1–39 (MTNKKRRQRGSRTHGGGTHKNRRGAGHRGGRGAAGRAKH) and 137–165 (AGGEATLSERAEEAADESENTSDDEDDEA). Acidic residues predominate over residues 150–165 (AADESENTSDDEDDEA).

The protein belongs to the universal ribosomal protein uL15 family. Part of the 50S ribosomal subunit.

In terms of biological role, binds to the 23S rRNA. The chain is Large ribosomal subunit protein uL15 from Halorubrum lacusprofundi (strain ATCC 49239 / DSM 5036 / JCM 8891 / ACAM 34).